The chain runs to 476 residues: Bridging integrator 2 (476 aa).

Residues valine 26–serine 242 form the BAR domain. 2 disordered regions span residues tyrosine 269–alanine 369 and glycine 395–leucine 476. The segment covering glutamate 279 to arginine 292 has biased composition (polar residues). Positions proline 310–serine 324 are enriched in pro residues. Low complexity predominate over residues proline 325–serine 339. Positions glycine 340–glutamate 353 are enriched in basic and acidic residues. The segment covering valine 461–leucine 476 has biased composition (polar residues).

Its subcellular location is the cytoplasm. The polypeptide is Bridging integrator 2 (BIN2) (Gallus gallus (Chicken)).